The primary structure comprises 1044 residues: Ras GTPase-activating protein 1 (1044 aa).

M1 carries the N-acetylmethionine modification. The tract at residues 1 to 160 (MMAAEAGGEE…DEGDSLDGPE (160 aa)) is hydrophobic. The SH2 1 domain occupies 178–269 (WYHGKLDRTI…LKGEKLLYPV (92 aa)). The region spanning 276-338 (EDRRRVRAIL…VEDLVEEVGR (63 aa)) is the SH3 domain. Positions 348–438 (WFHGKISKQE…VEGYYLKEPV (91 aa)) constitute an SH2 2 domain. A PH domain is found at 471–574 (NIVKKGYLLK…WMKGLQAFCN (104 aa)). The region spanning 574–687 (NLRKSSPGTS…QKGHATDEWF (114 aa)) is the C2 domain. Residue Y612 is modified to Phosphotyrosine. 2 consecutive repeats follow at residues 646–664 (PDINRFEITLSNKTKKSKD) and 665–683 (PDILFMRCQLSRLQKGHAT). A Ras-GAP domain is found at 761–971 (KLESLLLCTL…HRMIMFLDEL (211 aa)). S828 bears the Phosphoserine mark.

Interacts with SQSTM1. Interacts with SPSB1; the interaction does not promote degradation. Interacts with CAV2 (tyrosine phosphorylated form). Directly interacts with NCK1. Interacts with PDGFRB (tyrosine phosphorylated). Interacts (via SH2 domain) with the 'Tyr-9' phosphorylated form of PDPK1. Interacts with tyrosine-phosphorylated EPHB4. Post-translationally, phosphorylated by SRC and LCK. The phosphorylation SRC inhibits its ability to stimulate the Ras-GTPase activity, whereas phosphorylation by LCK does not display any effect on stimulation activity.

It is found in the cytoplasm. In terms of biological role, inhibitory regulator of the Ras-cyclic AMP pathway. Stimulates the GTPase of normal but not oncogenic Ras p21. The polypeptide is Ras GTPase-activating protein 1 (RASA1) (Bos taurus (Bovine)).